The following is a 748-amino-acid chain: Translation factor GUF1 homolog 2, mitochondrial (748 aa).

Residues 1 to 29 (MRVGCCLLLKPLRQRLCTASISSRHIMRW) constitute a mitochondrion transit peptide. Residues 94-276 (SHIRNVAVVA…AIIERVPPPT (183 aa)) form the tr-type G domain. GTP-binding positions include 103–110 (AHVDHGKT), 167–171 (DTPGH), and 221–224 (TKMD).

This sequence belongs to the TRAFAC class translation factor GTPase superfamily. Classic translation factor GTPase family. LepA subfamily.

It localises to the mitochondrion inner membrane. It carries out the reaction GTP + H2O = GDP + phosphate + H(+). In terms of biological role, promotes mitochondrial protein synthesis. May act as a fidelity factor of the translation reaction, by catalyzing a one-codon backward translocation of tRNAs on improperly translocated ribosomes. Binds to mitochondrial ribosomes in a GTP-dependent manner. This is Translation factor GUF1 homolog 2, mitochondrial from Trypanosoma cruzi (strain CL Brener).